The following is a 257-amino-acid chain: tRNA pseudouridine synthase A (257 aa).

D53 functions as the Nucleophile in the catalytic mechanism. Y111 serves as a coordination point for substrate.

It belongs to the tRNA pseudouridine synthase TruA family. As to quaternary structure, homodimer.

It catalyses the reaction uridine(38/39/40) in tRNA = pseudouridine(38/39/40) in tRNA. Its function is as follows. Formation of pseudouridine at positions 38, 39 and 40 in the anticodon stem and loop of transfer RNAs. In Xylella fastidiosa (strain M23), this protein is tRNA pseudouridine synthase A.